Consider the following 540-residue polypeptide: DM7 family protein GM11956 (540 aa).

The interval 416–443 is disordered; it reads ATDTRGRDEIRTSCDQPQEKDEGSAEAD. The span at 417 to 443 shows a compositional bias: basic and acidic residues; sequence TDTRGRDEIRTSCDQPQEKDEGSAEAD.

The protein belongs to the DM7 family.

This Drosophila sechellia (Fruit fly) protein is DM7 family protein GM11956.